The chain runs to 231 residues: 5'-methylthioadenosine/S-adenosylhomocysteine nucleosidase (231 aa).

E12 (proton acceptor) is an active-site residue. Substrate contacts are provided by residues G78, V153, and 174–175 (ME). D198 acts as the Proton donor in catalysis.

It belongs to the PNP/UDP phosphorylase family. MtnN subfamily.

The catalysed reaction is S-adenosyl-L-homocysteine + H2O = S-(5-deoxy-D-ribos-5-yl)-L-homocysteine + adenine. It catalyses the reaction S-methyl-5'-thioadenosine + H2O = 5-(methylsulfanyl)-D-ribose + adenine. It carries out the reaction 5'-deoxyadenosine + H2O = 5-deoxy-D-ribose + adenine. Its pathway is amino-acid biosynthesis; L-methionine biosynthesis via salvage pathway; S-methyl-5-thio-alpha-D-ribose 1-phosphate from S-methyl-5'-thioadenosine (hydrolase route): step 1/2. In terms of biological role, catalyzes the irreversible cleavage of the glycosidic bond in both 5'-methylthioadenosine (MTA) and S-adenosylhomocysteine (SAH/AdoHcy) to adenine and the corresponding thioribose, 5'-methylthioribose and S-ribosylhomocysteine, respectively. Also cleaves 5'-deoxyadenosine, a toxic by-product of radical S-adenosylmethionine (SAM) enzymes, into 5-deoxyribose and adenine. The protein is 5'-methylthioadenosine/S-adenosylhomocysteine nucleosidase of Vibrio atlanticus (strain LGP32) (Vibrio splendidus (strain Mel32)).